Here is a 215-residue protein sequence, read N- to C-terminus: MEGRIPLIGEEFPRLEVKTTHGKKILPDDFRGKWFVLFSHPADFTPVCTTEFVAFQKRYDEFKKLNTELIGLSIDQVFSHIKWIEWIKEKLGVEIEFPVIADDLGEVSRRLGLIHPSKGTNTVRAVFIVDPNGIIRAIVYYPQEVGRNIDEILRAVRALQTSDEKGVAIPANWPSNELINDSVIVPPASSVEEARERLESKDFECYDWWFCYKKV.

The Thioredoxin domain occupies 6–161; it reads PLIGEEFPRL…ILRAVRALQT (156 aa). Cys48 acts as the Cysteine sulfenic acid (-SOH) intermediate in catalysis. Arg124 is a binding site for substrate. Cys205 and Cys211 form a disulfide bridge.

It belongs to the peroxiredoxin family. Prx6 subfamily. As to quaternary structure, homodecamer. Pentamer of dimers that assemble into a ring structure.

The protein resides in the cytoplasm. It catalyses the reaction a hydroperoxide + [thioredoxin]-dithiol = an alcohol + [thioredoxin]-disulfide + H2O. Its function is as follows. Thiol-specific peroxidase that catalyzes the reduction of hydrogen peroxide and organic hydroperoxides to water and alcohols, respectively. Plays a role in cell protection against oxidative stress by detoxifying peroxides. This chain is Peroxiredoxin, found in Thermotoga petrophila (strain ATCC BAA-488 / DSM 13995 / JCM 10881 / RKU-1).